A 394-amino-acid polypeptide reads, in one-letter code: Succinate--CoA ligase [ADP-forming] subunit beta 1 (394 aa).

Residues 9–237 (RDLFAKHDVP…KAAANPLEAA (229 aa)) enclose the ATP-grasp domain. ATP contacts are provided by residues Lys45, 52-54 (GRG), Glu92, Pro95, and Glu100. Residues Asn192 and Asp206 each contribute to the Mg(2+) site. Residues Asn257 and 319-321 (GIT) contribute to the substrate site.

This sequence belongs to the succinate/malate CoA ligase beta subunit family. As to quaternary structure, heterotetramer of two alpha and two beta subunits. Requires Mg(2+) as cofactor.

The catalysed reaction is succinate + ATP + CoA = succinyl-CoA + ADP + phosphate. It catalyses the reaction GTP + succinate + CoA = succinyl-CoA + GDP + phosphate. It participates in carbohydrate metabolism; tricarboxylic acid cycle; succinate from succinyl-CoA (ligase route): step 1/1. Its function is as follows. Succinyl-CoA synthetase functions in the citric acid cycle (TCA), coupling the hydrolysis of succinyl-CoA to the synthesis of either ATP or GTP and thus represents the only step of substrate-level phosphorylation in the TCA. The beta subunit provides nucleotide specificity of the enzyme and binds the substrate succinate, while the binding sites for coenzyme A and phosphate are found in the alpha subunit. This Streptomyces coelicolor (strain ATCC BAA-471 / A3(2) / M145) protein is Succinate--CoA ligase [ADP-forming] subunit beta 1.